Consider the following 86-residue polypeptide: Mu-theraphotoxin-Hhn1b 1 (86 aa).

An N-terminal signal peptide occupies residues 1–21 (MKASMFLALAGLALLFVVCYA). Positions 22 to 49 (SESEEKEFSNELLSSVLAVDDNSKGEER) are excised as a propeptide. 3 disulfides stabilise this stretch: cysteine 51/cysteine 66, cysteine 58/cysteine 73, and cysteine 65/cysteine 80. Position 84 is an isoleucine amide (isoleucine 84).

Belongs to the neurotoxin 10 (Hwtx-1) family. 22 (Htx-4) subfamily. Monomer. In terms of tissue distribution, expressed by the venom gland.

Its subcellular location is the secreted. Its function is as follows. Neurotoxin that selectively inhibits neuronal tetrodotoxin-sensitive voltage-gated sodium channels (Nav) (IC(50)=44.6 nM). It is active on Nav1.2/SCN2A (IC(50)=22.4 nM), Nav1.6/SCN8A (IC(50)=50.1 nM) and Nav1.7/SCN9A (IC(50)=48.9 nM). It shows low affinity for lipid bilayers. This chain is Mu-theraphotoxin-Hhn1b 1, found in Cyriopagopus hainanus (Chinese bird spider).